The primary structure comprises 78 residues: Defensin-like protein 149 (78 aa).

Positions Met-1–Ala-25 are cleaved as a signal peptide. Intrachain disulfides connect Cys-36-Cys-77, Cys-45-Cys-65, Cys-50-Cys-71, and Cys-54-Cys-73.

It belongs to the DEFL family.

It is found in the secreted. This Arabidopsis thaliana (Mouse-ear cress) protein is Defensin-like protein 149 (LCR5).